The sequence spans 256 residues: Enkurin (256 aa).

The SH3-binding motif lies at 83 to 89; sequence PKKPAVP. The Enkurin domain maps to 160 to 252; sequence KRNEEIKKAQ…IIEKHKIIYI (93 aa). Positions 160–255 are interaction with TRPC proteins; that stretch reads KRNEEIKKAQ…KHKIIYIANN (96 aa). Residues 176-187 enclose the IQ domain; that stretch reads IQENLKKAAMKR.

As to quaternary structure, microtubule inner protein component of sperm flagellar doublet microtubules. Binds calmodulin via its IQ domain. Interacts with TRPC1, TRPC2, TRPC5, but not TRPC3. Interacts with CFAP45. Expressed in airway epithelial cells.

The protein localises to the cytoplasm. It localises to the cytoskeleton. Its subcellular location is the cilium axoneme. The protein resides in the flagellum axoneme. Adapter that functions to localize a calcium-sensitive signal transduction machinery in sperm to a calcium-permeable ion channel. Microtubule inner protein (MIP) part of the dynein-decorated doublet microtubules (DMTs) in cilia axoneme, which is required for motile cilia beating. The sequence is that of Enkurin from Homo sapiens (Human).